A 311-amino-acid polypeptide reads, in one-letter code: Homoserine kinase (311 aa).

96 to 106 is a binding site for ATP; it reads PLARGLGSSAA.

Belongs to the GHMP kinase family. Homoserine kinase subfamily.

The protein localises to the cytoplasm. It catalyses the reaction L-homoserine + ATP = O-phospho-L-homoserine + ADP + H(+). It participates in amino-acid biosynthesis; L-threonine biosynthesis; L-threonine from L-aspartate: step 4/5. Functionally, catalyzes the ATP-dependent phosphorylation of L-homoserine to L-homoserine phosphate. The protein is Homoserine kinase of Natranaerobius thermophilus (strain ATCC BAA-1301 / DSM 18059 / JW/NM-WN-LF).